Consider the following 101-residue polypeptide: UPF0235 protein Maeo_0841 (101 aa).

Belongs to the UPF0235 family.

This chain is UPF0235 protein Maeo_0841, found in Methanococcus aeolicus (strain ATCC BAA-1280 / DSM 17508 / OCM 812 / Nankai-3).